A 397-amino-acid chain; its full sequence is Major outer membrane porin, serovar C (397 aa).

The signal sequence occupies residues 1–22; it reads MKKLLKSVLVFAALSSASSLQA.

Belongs to the chlamydial porin (CP) (TC 1.B.2) family. Part of a disulfide cross-linked outer membrane complex (COMC) composed of the major outer membrane porin (MOMP), the small cysteine-rich protein (OmcA) and the large cysteine-rich periplasmic protein (OmcB).

It is found in the cell outer membrane. In terms of biological role, in elementary bodies (EBs, the infectious stage, which is able to survive outside the host cell) provides the structural integrity of the outer envelope through disulfide cross-links with the small cysteine-rich protein and the large cysteine-rich periplasmic protein. It has been described in publications as the Sarkosyl-insoluble COMC (Chlamydia outer membrane complex), and serves as the functional equivalent of peptidoglycan. Functionally, permits diffusion of specific solutes through the outer membrane. The polypeptide is Major outer membrane porin, serovar C (ompA) (Chlamydia trachomatis).